The sequence spans 139 residues: SPbeta prophage-derived uncharacterized protein YomN (139 aa).

This Bacillus subtilis (strain 168) protein is SPbeta prophage-derived uncharacterized protein YomN (yomN).